The sequence spans 207 residues: 8-oxoguanine DNA glycosylase/AP lyase (207 aa).

Active-site residues include Lys-128 and Asp-146.

It belongs to the type-2 OGG1 family.

It carries out the reaction 2'-deoxyribonucleotide-(2'-deoxyribose 5'-phosphate)-2'-deoxyribonucleotide-DNA = a 3'-end 2'-deoxyribonucleotide-(2,3-dehydro-2,3-deoxyribose 5'-phosphate)-DNA + a 5'-end 5'-phospho-2'-deoxyribonucleoside-DNA + H(+). Its function is as follows. Catalyzes the excision of an oxidatively damaged form of guanine (7,8-dihydro-8-oxoguanine = 8-oxoG) from DNA. Also cleaves the DNA backbone at apurinic/apyrimidinic sites (AP sites). The polypeptide is 8-oxoguanine DNA glycosylase/AP lyase (Saccharolobus islandicus (strain Y.N.15.51 / Yellowstone #2) (Sulfolobus islandicus)).